The chain runs to 214 residues: Endosomal/vacuolar adapter protein YPT35 (214 aa).

Residues 1-63 (MNDKISFLPP…ATITRTRPRR (63 aa)) form a disordered region. Residues 5 to 15 (ISFLPPEPIQL) carry the PxP motif. The segment covering 16 to 31 (LDEDSTEPELDIDSQQ) has biased composition (acidic residues). Over residues 38–58 (SASNSNDSTSHSNDCGATITR) the composition is skewed to low complexity. Phosphoserine is present on residues S65 and S66. The PX domain occupies 73–213 (FQKAHVSDCT…IQFLEPSKRV (141 aa)).

Belongs to the YPT35 family. Interacts with RBD2, YIF1, YIP1 and YIP4.

Its subcellular location is the endosome membrane. The protein localises to the vacuole membrane. Functionally, recruits the lipid transfer protein VPS13 to endosomal and vacuolar membranes. The protein is Endosomal/vacuolar adapter protein YPT35 (YPT35) of Saccharomyces cerevisiae (strain YJM789) (Baker's yeast).